A 1241-amino-acid polypeptide reads, in one-letter code: ATP-dependent helicase/nuclease subunit A (1241 aa).

The 474-residue stretch at 12–485 folds into the UvrD-like helicase ATP-binding domain; sequence SQWTDDQWKA…IDLAKNFRSR (474 aa). 33-40 contributes to the ATP binding site; that stretch reads AAAGSGKT. One can recognise a UvrD-like helicase C-terminal domain in the interval 505 to 805; it reads GEIDYDADAE…RIMTIHKSKG (301 aa).

Belongs to the helicase family. AddA subfamily. Heterodimer of AddA and AddB/RexB. Requires Mg(2+) as cofactor.

The catalysed reaction is Couples ATP hydrolysis with the unwinding of duplex DNA by translocating in the 3'-5' direction.. The enzyme catalyses ATP + H2O = ADP + phosphate + H(+). In terms of biological role, the heterodimer acts as both an ATP-dependent DNA helicase and an ATP-dependent, dual-direction single-stranded exonuclease. Recognizes the chi site generating a DNA molecule suitable for the initiation of homologous recombination. The AddA nuclease domain is required for chi fragment generation; this subunit has the helicase and 3' -&gt; 5' nuclease activities. The protein is ATP-dependent helicase/nuclease subunit A of Bacillus cereus (strain AH187).